A 74-amino-acid polypeptide reads, in one-letter code: Sec-independent protein translocase protein TatA (74 aa).

Residues 1–21 (MGGISIWQLLIIVAIVVLLFG) traverse the membrane as a helical segment. The disordered stretch occupies residues 45-74 (EEPKDAEFKSLDKAENTAQTKKEEKEKEQA).

Belongs to the TatA/E family. The Tat system comprises two distinct complexes: a TatABC complex, containing multiple copies of TatA, TatB and TatC subunits, and a separate TatA complex, containing only TatA subunits. Substrates initially bind to the TatABC complex, which probably triggers association of the separate TatA complex to form the active translocon.

It localises to the cell inner membrane. Functionally, part of the twin-arginine translocation (Tat) system that transports large folded proteins containing a characteristic twin-arginine motif in their signal peptide across membranes. TatA could form the protein-conducting channel of the Tat system. In Actinobacillus succinogenes (strain ATCC 55618 / DSM 22257 / CCUG 43843 / 130Z), this protein is Sec-independent protein translocase protein TatA.